Consider the following 716-residue polypeptide: 1,4-alpha-glucan branching enzyme GlgB (716 aa).

The Nucleophile role is filled by Asp398. The Proton donor role is filled by Glu451.

Belongs to the glycosyl hydrolase 13 family. GlgB subfamily. Monomer.

It catalyses the reaction Transfers a segment of a (1-&gt;4)-alpha-D-glucan chain to a primary hydroxy group in a similar glucan chain.. It participates in glycan biosynthesis; glycogen biosynthesis. Catalyzes the formation of the alpha-1,6-glucosidic linkages in glycogen by scission of a 1,4-alpha-linked oligosaccharide from growing alpha-1,4-glucan chains and the subsequent attachment of the oligosaccharide to the alpha-1,6 position. In Nitrobacter hamburgensis (strain DSM 10229 / NCIMB 13809 / X14), this protein is 1,4-alpha-glucan branching enzyme GlgB.